A 111-amino-acid chain; its full sequence is Cryptic phage CTXphi transcriptional repressor RstR (111 aa).

The HTH cro/C1-type domain occupies 6-60 (IRDLRVERDLNQEEVANGIGVGKNTYLAYEKGTQSPKLETVEKLAKFYGVPIAEL). The segment at residues 17-36 (QEEVANGIGVGKNTYLAYEK) is a DNA-binding region (H-T-H motif).

Functionally, transcriptional repressor of the integrated CTXPhi phage gene rstA2. This chain is Cryptic phage CTXphi transcriptional repressor RstR (rstR), found in Vibrio cholerae.